We begin with the raw amino-acid sequence, 748 residues long: Catalase-peroxidase (748 aa).

Residues 92 to 238 (WHSAGTYRTG…LAAVQMGLIY (147 aa)) constitute a cross-link (tryptophyl-tyrosyl-methioninium (Trp-Tyr) (with M-264)). The Proton acceptor role is filled by H93. The segment at residues 238–264 (YVNPEGPDGNPDPLLAAKDIRDTFGRM) is a cross-link (tryptophyl-tyrosyl-methioninium (Tyr-Met) (with W-92)). H279 is a binding site for heme b.

Belongs to the peroxidase family. Peroxidase/catalase subfamily. As to quaternary structure, homodimer or homotetramer. Heme b is required as a cofactor. Post-translationally, formation of the three residue Trp-Tyr-Met cross-link is important for the catalase, but not the peroxidase activity of the enzyme.

It carries out the reaction H2O2 + AH2 = A + 2 H2O. It catalyses the reaction 2 H2O2 = O2 + 2 H2O. Its function is as follows. Bifunctional enzyme with both catalase and broad-spectrum peroxidase activity. The sequence is that of Catalase-peroxidase from Xanthomonas campestris pv. campestris (strain 8004).